The sequence spans 384 residues: Alkanesulfonate monooxygenase (384 aa).

It belongs to the SsuD family.

It catalyses the reaction an alkanesulfonate + FMNH2 + O2 = an aldehyde + FMN + sulfite + H2O + 2 H(+). Catalyzes the desulfonation of aliphatic sulfonates. The chain is Alkanesulfonate monooxygenase from Burkholderia thailandensis (strain ATCC 700388 / DSM 13276 / CCUG 48851 / CIP 106301 / E264).